The following is a 467-amino-acid chain: Cysteine--tRNA ligase (467 aa).

Cys-29 lines the Zn(2+) pocket. The 'HIGH' region motif lies at 31 to 41 (PTVYDDSHLGH). Residues 155 to 174 (KLSGRGEDLEQVSRIESSEE) form a disordered region. Over residues 158-174 (GRGEDLEQVSRIESSEE) the composition is skewed to basic and acidic residues. Residues Cys-210, His-239, and Glu-243 each contribute to the Zn(2+) site. A 'KMSKS' region motif is present at residues 271 to 275 (KMSKS). Position 274 (Lys-274) interacts with ATP.

It belongs to the class-I aminoacyl-tRNA synthetase family. As to quaternary structure, monomer. Requires Zn(2+) as cofactor.

The protein localises to the cytoplasm. The catalysed reaction is tRNA(Cys) + L-cysteine + ATP = L-cysteinyl-tRNA(Cys) + AMP + diphosphate. The polypeptide is Cysteine--tRNA ligase (Wolinella succinogenes (strain ATCC 29543 / DSM 1740 / CCUG 13145 / JCM 31913 / LMG 7466 / NCTC 11488 / FDC 602W) (Vibrio succinogenes)).